A 420-amino-acid chain; its full sequence is Aminoacyltransferase FemA (420 aa).

Belongs to the FemABX family. Homodimer. Interacts with FemB.

It localises to the cytoplasm. The enzyme catalyses beta-D-GlcNAc-(1-&gt;4)-Mur2Ac(oyl-L-Ala-D-isoglutaminyl-L-Lys-(N(6)-Gly)-D-Ala-D-Ala)-di-trans,octa-cis-undecaprenyl diphosphate + 2 glycyl-tRNA(Gly) = MurNAc-L-Ala-D-isoglutaminyl-L-Lys-(N(6)-tri-Gly)-D-Ala-D-Ala-diphospho-di-trans,octa-cis-undecaprenyl-GlcNAc + 2 tRNA(Gly) + 2 H(+). Functionally, catalyzes the formation of the pentaglycine interpeptide bridge, which is characteristic of the S.aureus peptidoglycan. Adds glycines 2 and 3 of the pentaglycine bridge, using glycyl-tRNA(Gly) as donor. Involved in resistance to methicillin. This Staphylococcus aureus (strain Mu50 / ATCC 700699) protein is Aminoacyltransferase FemA (femA).